The chain runs to 220 residues: Ribosome maturation factor RimP (220 aa).

The segment at 173–220 (KKDKEERRQRKKARRRGEKGGVGDDGTAGEEQPDSAREGPARSASEGE) is disordered.

It belongs to the RimP family.

The protein localises to the cytoplasm. Required for maturation of 30S ribosomal subunits. The sequence is that of Ribosome maturation factor RimP from Chelativorans sp. (strain BNC1).